We begin with the raw amino-acid sequence, 314 residues long: Olfactory receptor 52H1 (314 aa).

At 1–32 (MIIFNLSSYNPGPFILVGIPGLEQFHVWIGIP) the chain is on the extracellular side. N-linked (GlcNAc...) asparagine glycosylation is present at Asn5. The helical transmembrane segment at 33–53 (FCIIYIVAVVGNCILLYLIVV) threads the bilayer. Residues 54 to 59 (EHSLHE) lie on the Cytoplasmic side of the membrane. Residues 60-80 (PMFFFLSMLAMTDLILSTAGV) form a helical membrane-spanning segment. The Extracellular portion of the chain corresponds to 81–101 (PKALSIFWLGAREITFPGCLT). Cys99 and Cys181 form a disulfide bridge. The helical transmembrane segment at 102 to 122 (QMFFLHYNFVLDSAILMAMAF) threads the bilayer. At 123 to 149 (DHYVAICSPLRYTTILTPKTIIKSAMG) the chain is on the cytoplasmic side. Residues 150–170 (ISFRSFCIILPDVFLLTCLPF) form a helical membrane-spanning segment. Over 171–197 (CRTRIIPHTYCEHIGVAQLACADISIN) the chain is Extracellular. Residues 198-218 (FWYGFCVPIMTVISDVILIAV) traverse the membrane as a helical segment. At 219–242 (SYAHILCAVFGLPSQDACQKALGT) the chain is on the cytoplasmic side. The helical transmembrane segment at 243-263 (CGSHVCVILMFYTPAFFSILA) threads the bilayer. The Extracellular segment spans residues 264–275 (HRFGHNVSRTFH). An N-linked (GlcNAc...) asparagine glycan is attached at Asn269. Residues 276 to 296 (IMFANLYIVIPPALNPMVYGV) traverse the membrane as a helical segment. At 297–314 (KTKQIRDKVILLFSKGTG) the chain is on the cytoplasmic side.

The protein belongs to the G-protein coupled receptor 1 family.

The protein resides in the membrane. Functionally, odorant receptor. The sequence is that of Olfactory receptor 52H1 (OR52H1) from Homo sapiens (Human).